Reading from the N-terminus, the 200-residue chain is MAWGGVHTCCFHLCCCCSWPQGAVPEELHKHPGQTLLLQCQYSPKRGPYQPKSWCQQTSPSRCTLLVTSSKPWTAVQKSHYTIWDKPNAGFFNITMIQLTQNDSGFYWCGIYNASENIITVLRNISLVVSPAPTTSPMWTLPWLPTSTVLITSPEGTSGHPSINGSETRKSRAPACLGSGGPRFLVLVLCGLLLAKGLML.

Positions 1–25 are cleaved as a signal peptide; the sequence is MAWGGVHTCCFHLCCCCSWPQGAVP. An Ig-like V-type domain is found at 26–126; that stretch reads EELHKHPGQT…NIITVLRNIS (101 aa). The cysteines at positions 40 and 109 are disulfide-linked. Residue N93 is glycosylated (N-linked (GlcNAc...) asparagine).

Its subcellular location is the secreted. Positively regulates Toll-like receptor TLR7 signaling in macrophages. The sequence is that of Trem-like transcript 4 protein (TREML4) from Homo sapiens (Human).